We begin with the raw amino-acid sequence, 247 residues long: Peroxisomal membrane protein 11A (247 aa).

Residues 1 to 83 (MDAFTRFTNQ…SIHATDLVPR (83 aa)) are Cytoplasmic-facing. A helical membrane pass occupies residues 84 to 105 (LCLTLANLNRVIYFICDTILWV). Over 106 to 219 (RSVGLTSGIN…DQLGIYKSNP (114 aa)) the chain is Lumenal. The helical transmembrane segment at 220-239 (GIIGLGGLVSSIAGMITVAY) threads the bilayer. A required for homodimerization, interaction with PEX11G, and peroxisomal localization region spans residues 220–239 (GIIGLGGLVSSIAGMITVAY). Residues 240–247 (PQMKLKTR) are Cytoplasmic-facing.

Belongs to the peroxin-11 family. In terms of assembly, homodimer. Heterodimer with PEX11G. Probably interacts with COPB2 and COPA. Interacts with PEX19. Interacts with FIS1. Post-translationally, seems not to be N-glycosylated.

The protein localises to the peroxisome membrane. Its function is as follows. May be involved in peroxisomal proliferation and may regulate peroxisomes division. May mediate binding of coatomer proteins to the peroxisomal membrane. Promotes membrane protrusion and elongation on the peroxisomal surface. This is Peroxisomal membrane protein 11A (PEX11A) from Homo sapiens (Human).